The following is a 206-amino-acid chain: Large ribosomal subunit protein uL4 (206 aa).

This sequence belongs to the universal ribosomal protein uL4 family. As to quaternary structure, part of the 50S ribosomal subunit.

One of the primary rRNA binding proteins, this protein initially binds near the 5'-end of the 23S rRNA. It is important during the early stages of 50S assembly. It makes multiple contacts with different domains of the 23S rRNA in the assembled 50S subunit and ribosome. In terms of biological role, forms part of the polypeptide exit tunnel. The protein is Large ribosomal subunit protein uL4 of Methylocella silvestris (strain DSM 15510 / CIP 108128 / LMG 27833 / NCIMB 13906 / BL2).